Reading from the N-terminus, the 348-residue chain is tRNA N6-adenosine threonylcarbamoyltransferase (348 aa).

Fe cation contacts are provided by histidine 115 and histidine 119. Substrate-binding positions include 138–142 (LVSGG), aspartate 171, glycine 184, and asparagine 276. A Fe cation-binding site is contributed by aspartate 304.

The protein belongs to the KAE1 / TsaD family. Fe(2+) serves as cofactor.

Its subcellular location is the cytoplasm. The enzyme catalyses L-threonylcarbamoyladenylate + adenosine(37) in tRNA = N(6)-L-threonylcarbamoyladenosine(37) in tRNA + AMP + H(+). Functionally, required for the formation of a threonylcarbamoyl group on adenosine at position 37 (t(6)A37) in tRNAs that read codons beginning with adenine. Is involved in the transfer of the threonylcarbamoyl moiety of threonylcarbamoyl-AMP (TC-AMP) to the N6 group of A37, together with TsaE and TsaB. TsaD likely plays a direct catalytic role in this reaction. The chain is tRNA N6-adenosine threonylcarbamoyltransferase from Xylella fastidiosa (strain M23).